Here is a 418-residue protein sequence, read N- to C-terminus: Deubiquitinase and deneddylase Dub1 (418 aa).

Residues 1–10 (MLSPTNSTSK) are compositionally biased toward polar residues. The interval 1–23 (MLSPTNSTSKKAPVPPQDSSKPV) is disordered. A helical membrane pass occupies residues 40-60 (TALAVLLVVVTLGLILLFYSF). A disordered region spans residues 72–143 (TRPSTKEQPT…PPLPPKAPKP (72 aa)). Pro residues predominate over residues 86–141 (VPLPSPPLAVPRPSTPPPPVISRPSTPPAPTPAISPPSTPSAPKPSTPPPLPPKAP). Catalysis depends on residues H288, D305, and C358.

Belongs to the peptidase C48 family.

The protein localises to the secreted. It is found in the host cell. Its subcellular location is the membrane. Functionally, effector proteins function to alter host cell physiology and promote bacterial survival in host tissues. This protease possesses deubiquitinating and deneddylating activities. The polypeptide is Deubiquitinase and deneddylase Dub1 (cdu1) (Chlamydia trachomatis serovar D (strain ATCC VR-885 / DSM 19411 / UW-3/Cx)).